The sequence spans 86 residues: MAEKRKYSRKYCKYTEAKVEFIDYKDTAMLKHALSERFKIMPRRLTGTSKKYQEMVEVAIKRARHVALIPYIVDRKEVINNPFEGL.

It belongs to the bacterial ribosomal protein bS18 family. Part of the 30S ribosomal subunit. Forms a tight heterodimer with protein bS6.

In terms of biological role, binds as a heterodimer with protein bS6 to the central domain of the 16S rRNA, where it helps stabilize the platform of the 30S subunit. This is Small ribosomal subunit protein bS18 from Campylobacter jejuni subsp. jejuni serotype O:6 (strain 81116 / NCTC 11828).